The primary structure comprises 273 residues: GATA-type zinc finger protein 1 (273 aa).

Disordered regions lie at residues 99 to 143 and 172 to 201; these read RDSK…ERVD and SSRSQESPADAVGGPAAHPGGTEAHSAGSE. Residues 208–232 form a GATA-type zinc finger; it reads CASCRTQRTPLWRDAEDGTPLCNAC.

It localises to the nucleus. Transcriptional regulator that plays a key role in germ cell development. Determines the oogenic fate by activating key genes for the oogenic program and meiotic prophase entry. Acts downstream of bone morphogenetic protein (BMP) by regulating expression of genes required for the oogenic programs, which are repressed by Polycomb activities in sexually uncommitted germ cells. Regulates expression of STRA8, a central downstream effector for the meiotic program. Acts independently of retinoic acid (RA). In males, not required for germ-cell sex determination, but required to allow the spermatogonia to efficiently accomplish the meiotic prophase. The polypeptide is GATA-type zinc finger protein 1 (Homo sapiens (Human)).